Consider the following 349-residue polypeptide: Bifunctional protein FolKE (349 aa).

Residues 1-226 (MQTTYLSMGS…LFEIDSSKTD (226 aa)) are 2-amino-4-hydroxy-6-hydroxymethyldihydropteridine pyrophosphokinase. The interval 226–349 (DSIVLIKDIP…KRMEFLESLL (124 aa)) is GTP cyclohydrolase 1.

This sequence in the N-terminal section; belongs to the HPPK family. The protein in the C-terminal section; belongs to the GTP cyclohydrolase I family. Homomer.

The enzyme catalyses 6-hydroxymethyl-7,8-dihydropterin + ATP = (7,8-dihydropterin-6-yl)methyl diphosphate + AMP + H(+). It carries out the reaction GTP + H2O = 7,8-dihydroneopterin 3'-triphosphate + formate + H(+). It participates in cofactor biosynthesis; 7,8-dihydroneopterin triphosphate biosynthesis; 7,8-dihydroneopterin triphosphate from GTP: step 1/1. The protein operates within cofactor biosynthesis; tetrahydrofolate biosynthesis; 2-amino-4-hydroxy-6-hydroxymethyl-7,8-dihydropteridine diphosphate from 7,8-dihydroneopterin triphosphate: step 4/4. This Lactococcus lactis subsp. lactis (strain IL1403) (Streptococcus lactis) protein is Bifunctional protein FolKE (folKE).